Reading from the N-terminus, the 291-residue chain is Prepilin leader peptidase/N-methyltransferase (291 aa).

A helical membrane pass occupies residues 14–34 (LYFSLVFLFSLMIGSFLNVVI). Zn(2+) is bound by residues cysteine 75, cysteine 78, cysteine 100, and cysteine 103. 6 helical membrane passes run 107–127 (ISARYPLVELLTALLSVVVAM), 131–151 (PGWGTLAALLLTWVLVALTFI), 162–182 (LTLPLLWGGLLFNLLGGYVPL), 186–206 (VIGAMAGYLVLWSLYWAFKLL), 232–252 (LPIVLLLSSLVGAIFGIGLIL), and 262–282 (IPFGPYLAIAGWIALLWGDSI).

This sequence belongs to the peptidase A24 family. Requires Zn(2+) as cofactor.

Its subcellular location is the cell inner membrane. The catalysed reaction is Typically cleaves a -Gly-|-Phe- bond to release an N-terminal, basic peptide of 5-8 residues from type IV prepilin, and then N-methylates the new N-terminal amino group, the methyl donor being S-adenosyl-L-methionine.. Its function is as follows. Plays an essential role in type IV pili and type II pseudopili formation by proteolytically removing the leader sequence from substrate proteins and subsequently monomethylating the alpha-amino group of the newly exposed N-terminal phenylalanine. The protein is Prepilin leader peptidase/N-methyltransferase (tapD) of Aeromonas salmonicida (strain A449).